Here is a 161-residue protein sequence, read N- to C-terminus: Phosphopantetheine adenylyltransferase (161 aa).

Ser9 provides a ligand contact to substrate. ATP contacts are provided by residues Ser9–Phe10 and His17. 3 residues coordinate substrate: Lys41, Leu73, and Arg87. Residues Gly88–Arg90, Glu98, and Thr123–Thr129 contribute to the ATP site.

The protein belongs to the bacterial CoaD family. Homohexamer. Mg(2+) serves as cofactor.

It is found in the cytoplasm. It catalyses the reaction (R)-4'-phosphopantetheine + ATP + H(+) = 3'-dephospho-CoA + diphosphate. The protein operates within cofactor biosynthesis; coenzyme A biosynthesis; CoA from (R)-pantothenate: step 4/5. Functionally, reversibly transfers an adenylyl group from ATP to 4'-phosphopantetheine, yielding dephospho-CoA (dPCoA) and pyrophosphate. The chain is Phosphopantetheine adenylyltransferase from Psychromonas ingrahamii (strain DSM 17664 / CCUG 51855 / 37).